Here is a 482-residue protein sequence, read N- to C-terminus: tRNA sulfurtransferase (482 aa).

Positions 61 to 165 (SAIRDALTRI…QDRLLLIKGR (105 aa)) constitute a THUMP domain. Residues 183-184 (LI), lysine 265, glycine 287, and glutamine 296 contribute to the ATP site. A disulfide bridge links cysteine 344 with cysteine 456. Positions 404-482 (FAPTDVLLDI…GFSNVKVYRP (79 aa)) constitute a Rhodanese domain. The Cysteine persulfide intermediate role is filled by cysteine 456.

Belongs to the ThiI family.

It is found in the cytoplasm. The catalysed reaction is [ThiI sulfur-carrier protein]-S-sulfanyl-L-cysteine + a uridine in tRNA + 2 reduced [2Fe-2S]-[ferredoxin] + ATP + H(+) = [ThiI sulfur-carrier protein]-L-cysteine + a 4-thiouridine in tRNA + 2 oxidized [2Fe-2S]-[ferredoxin] + AMP + diphosphate. It carries out the reaction [ThiS sulfur-carrier protein]-C-terminal Gly-Gly-AMP + S-sulfanyl-L-cysteinyl-[cysteine desulfurase] + AH2 = [ThiS sulfur-carrier protein]-C-terminal-Gly-aminoethanethioate + L-cysteinyl-[cysteine desulfurase] + A + AMP + 2 H(+). The protein operates within cofactor biosynthesis; thiamine diphosphate biosynthesis. Functionally, catalyzes the ATP-dependent transfer of a sulfur to tRNA to produce 4-thiouridine in position 8 of tRNAs, which functions as a near-UV photosensor. Also catalyzes the transfer of sulfur to the sulfur carrier protein ThiS, forming ThiS-thiocarboxylate. This is a step in the synthesis of thiazole, in the thiamine biosynthesis pathway. The sulfur is donated as persulfide by IscS. In Pectobacterium carotovorum subsp. carotovorum (strain PC1), this protein is tRNA sulfurtransferase.